The following is a 123-amino-acid chain: Large ribosomal subunit protein uL14 (123 aa).

Belongs to the universal ribosomal protein uL14 family. In terms of assembly, part of the 50S ribosomal subunit. Forms a cluster with proteins L3 and L19. In the 70S ribosome, L14 and L19 interact and together make contacts with the 16S rRNA in bridges B5 and B8.

In terms of biological role, binds to 23S rRNA. Forms part of two intersubunit bridges in the 70S ribosome. This is Large ribosomal subunit protein uL14 from Vibrio parahaemolyticus serotype O3:K6 (strain RIMD 2210633).